Consider the following 490-residue polypeptide: Betaine aldehyde dehydrogenase (490 aa).

3 residues coordinate K(+): Thr-26, Ile-27, and Asp-93. 150–152 serves as a coordination point for NAD(+); the sequence is GAW. Catalysis depends on Lys-162, which acts as the Charge relay system. 176-179 contributes to the NAD(+) binding site; sequence KPSE. Val-180 is a binding site for K(+). Residue 230 to 233 coordinates NAD(+); the sequence is GVAS. Position 246 (Leu-246) interacts with K(+). Glu-252 (proton acceptor) is an active-site residue. The NAD(+) site is built by Gly-254, Cys-286, and Glu-387. Cys-286 (nucleophile) is an active-site residue. Residue Cys-286 is modified to Cysteine sulfenic acid (-SOH). K(+) is bound by residues Lys-457 and Gly-460. The active-site Charge relay system is the Glu-464.

Belongs to the aldehyde dehydrogenase family. In terms of assembly, dimer of dimers. Requires K(+) as cofactor.

The enzyme catalyses betaine aldehyde + NAD(+) + H2O = glycine betaine + NADH + 2 H(+). It participates in amine and polyamine biosynthesis; betaine biosynthesis via choline pathway; betaine from betaine aldehyde: step 1/1. Its function is as follows. Involved in the biosynthesis of the osmoprotectant glycine betaine. Catalyzes the irreversible oxidation of betaine aldehyde to the corresponding acid. This is Betaine aldehyde dehydrogenase from Escherichia coli (strain SE11).